Here is a 340-residue protein sequence, read N- to C-terminus: 4-amino-5-hydroxymethyl-2-methylpyrimidine phosphate synthase THI12 (340 aa).

At Lys-62 the chain carries N6-(pyridoxal phosphate)lysine. His-66 is an active-site residue. Residue 115-118 (GEFG) coordinates pyridoxal 5'-phosphate. Positions 195-199 (CCCFC) match the CCCFC; essential for catalytic activity, may be the site of iron coordination motif.

The protein belongs to the NMT1/THI5 family. In terms of assembly, homodimer. Fe cation is required as a cofactor.

The catalysed reaction is N(6)-(pyridoxal phosphate)-L-lysyl-[4-amino-5-hydroxymethyl-2-methylpyrimidine phosphate synthase] + L-histidyl-[4-amino-5-hydroxymethyl-2-methylpyrimidine phosphate synthase] + 2 Fe(3+) + 4 H2O = L-lysyl-[4-amino-5-hydroxymethyl-2-methylpyrimidine phosphate synthase] + (2S)-2-amino-5-hydroxy-4-oxopentanoyl-[4-amino-5-hydroxymethyl-2-methylpyrimidine phosphate synthase] + 4-amino-2-methyl-5-(phosphooxymethyl)pyrimidine + 3-oxopropanoate + 2 Fe(2+) + 2 H(+). It functions in the pathway cofactor biosynthesis; thiamine diphosphate biosynthesis. In terms of biological role, responsible for the formation of the pyrimidine heterocycle in the thiamine biosynthesis pathway. Catalyzes the formation of hydroxymethylpyrimidine phosphate (HMP-P) from histidine and pyridoxal phosphate (PLP). The protein uses PLP and the active site histidine to form HMP-P, generating an inactive enzyme. The enzyme can only undergo a single turnover, which suggests it is a suicide enzyme. This chain is 4-amino-5-hydroxymethyl-2-methylpyrimidine phosphate synthase THI12, found in Saccharomyces cerevisiae (strain ATCC 204508 / S288c) (Baker's yeast).